The following is a 500-amino-acid chain: NAD(P)H-quinone oxidoreductase chain 4, chloroplastic (500 aa).

The next 14 helical transmembrane spans lie at 4 to 24 (FPWLTLIVVFPIFAGCFIFFL), 35 to 55 (YTMGICLLELLIMTYVFCYHF), 87 to 107 (IGPILLTGFITTLATLAAWPV), 113 to 130 (LFHFLMLAMYSGQIGLFS), 134 to 154 (LLLFFMMWELELIPVYLLLSM), 167 to 187 (FILYTAGGSIFLLIGVLGMGL), 208 to 228 (GLEILLYFGFLIAFAVKLPII), 242 to 262 (HYSTCMLLAGILLKMGAYGLI), 274 to 294 (SIFSPWLVIVGTIQIIYAALT), 305 to 325 (IAYSSVSHMGFIIIGIGSLTN), 330 to 350 (GAILQLLSHGFIGAALFFLGG), 386 to 406 (LALPGMSGFVAELMVFLGIIT), 416 to 436 (IIITLVMAIGIILTPIYLLSM), and 463 to 483 (FVSICIFLPVIAIGIYPDLVI).

This sequence belongs to the complex I subunit 4 family.

The protein localises to the plastid. The protein resides in the chloroplast thylakoid membrane. It carries out the reaction a plastoquinone + NADH + (n+1) H(+)(in) = a plastoquinol + NAD(+) + n H(+)(out). The catalysed reaction is a plastoquinone + NADPH + (n+1) H(+)(in) = a plastoquinol + NADP(+) + n H(+)(out). The sequence is that of NAD(P)H-quinone oxidoreductase chain 4, chloroplastic from Lemna minor (Common duckweed).